Reading from the N-terminus, the 257-residue chain is MPRLHDHVWSCSGSGAARPHSLPRGMIAAARCPQGSGAPEPAPRSPRAGTAGCGARPGSWHHDLVQRSLVLFSFGVVLALVLNLLQIQRNVTLFPDEVIATIFSSAWWVPPCCGTAAAVVGLLYPCIDSHLGEPHKFKREWASVMRCIAVFVGINHASAKLDFANNVQLSLTLAALSLGLWWTFDRSRSGLGLGITIAFLATLITQFLVYNGVYQYTSPDFLYIRSWLPCIFFSGGVTVGNIGRQLAMGVPEKPHSD.

The Cytoplasmic segment spans residues 1-64 (MPRLHDHVWS…ARPGSWHHDL (64 aa)). A disordered region spans residues 32–54 (CPQGSGAPEPAPRSPRAGTAGCG). A helical transmembrane segment spans residues 65-87 (VQRSLVLFSFGVVLALVLNLLQI). Topologically, residues 88–106 (QRNVTLFPDEVIATIFSSA) are extracellular. A helical transmembrane segment spans residues 107 to 124 (WWVPPCCGTAAAVVGLLY). Residues 125–139 (PCIDSHLGEPHKFKR) are Cytoplasmic-facing. Glycyl lysine isopeptide (Lys-Gly) (interchain with G-Cter in ubiquitin) cross-links involve residues Lys-136 and Lys-138. A helical membrane pass occupies residues 140 to 162 (EWASVMRCIAVFVGINHASAKLD). The Extracellular portion of the chain corresponds to 163–165 (FAN). Residues 166–184 (NVQLSLTLAALSLGLWWTF) form a helical membrane-spanning segment. The Cytoplasmic portion of the chain corresponds to 185–189 (DRSRS). The residue at position 187 (Ser-187) is a Phosphoserine. A helical transmembrane segment spans residues 190–211 (GLGLGITIAFLATLITQFLVYN). Residues 212-225 (GVYQYTSPDFLYIR) are Extracellular-facing. A helical transmembrane segment spans residues 226–243 (SWLPCIFFSGGVTVGNIG). The Cytoplasmic segment spans residues 244 to 257 (RQLAMGVPEKPHSD). A KxHxx motif is present at residues 251 to 257 (PEKPHSD).

Belongs to the INSIG family. As to quaternary structure, interacts with SCAP; interaction is direct and only takes place in the presence of sterols; it prevents interaction between SCAP and the coat protein complex II (COPII). Associates with the SCAP-SREBP complex (composed of SCAP and SREBF1/SREBP1 or SREBF2/SREBP2); association is mediated via its interaction with SCAP and only takes place in the presence of sterols. Interaction with SCAP is mutually exclusive with PAQR3. Interacts with HMGCR (via its SSD); the interaction, accelerated by sterols, leads to the recruitment of HMGCR to AMFR/gp78 for its ubiquitination by the sterol-mediated ERAD pathway. Interacts with AMFR/gp78 (via its membrane domain); the interaction recruits HMCR at the ER membrane for its ubiquitination and degradation by the sterol-mediated ERAD pathway. Interacts with SOAT2/ACAT2; leading to promote recruitment of AMFR/gp78 and subsequent ubiquitination of SOAT2/ACAT2. Interacts with RNF139. Interacts with RNF145. Post-translationally, phosphorylation at Ser-187 by PCK1 reduces binding to oxysterol, disrupting the interaction between INSIG1 and SCAP, thereby promoting nuclear translocation of SREBP proteins (SREBF1/SREBP1 or SREBF2/SREBP2) and subsequent transcription of downstream lipogenesis-related genes. Ubiquitinated by AMFR/gp78 in response to sterol deprivation, leading to its degradation: when the SCAP-SREBP complex becomes dissociated from INSIG1, INSIG1 is then ubiquitinated and degraded in proteasomes. Although ubiquitination is required for rapid INSIG1 degradation, it is not required for release of the SCAP-SREBP complex. Ubiquitinated by RNF139.

Its subcellular location is the endoplasmic reticulum membrane. In terms of biological role, oxysterol-binding protein that mediates feedback control of cholesterol synthesis by controlling both endoplasmic reticulum to Golgi transport of SCAP and degradation of HMGCR. Acts as a negative regulator of cholesterol biosynthesis by mediating the retention of the SCAP-SREBP complex in the endoplasmic reticulum, thereby blocking the processing of sterol regulatory element-binding proteins (SREBPs) SREBF1/SREBP1 and SREBF2/SREBP2. Binds oxysterol, including 25-hydroxycholesterol, regulating interaction with SCAP and retention of the SCAP-SREBP complex in the endoplasmic reticulum. In presence of oxysterol, interacts with SCAP, retaining the SCAP-SREBP complex in the endoplasmic reticulum, thereby preventing SCAP from escorting SREBF1/SREBP1 and SREBF2/SREBP2 to the Golgi. Sterol deprivation or phosphorylation by PCK1 reduce oxysterol-binding, disrupting the interaction between INSIG1 and SCAP, thereby promoting Golgi transport of the SCAP-SREBP complex, followed by processing and nuclear translocation of SREBF1/SREBP1 and SREBF2/SREBP2. Also regulates cholesterol synthesis by regulating degradation of HMGCR: initiates the sterol-mediated ubiquitin-mediated endoplasmic reticulum-associated degradation (ERAD) of HMGCR via recruitment of the reductase to the ubiquitin ligases AMFR/gp78 and/or RNF139. Also regulates degradation of SOAT2/ACAT2 when the lipid levels are low: initiates the ubiquitin-mediated degradation of SOAT2/ACAT2 via recruitment of the ubiquitin ligases AMFR/gp78. This chain is Insulin-induced gene 1 protein, found in Cricetulus griseus (Chinese hamster).